The sequence spans 84 residues: Anthracycline acyl carrier protein DauA (84 aa).

Residues 3–80 (ELSLAELREI…SMLIFVNERL (78 aa)) form the Carrier domain. Ser40 bears the O-(pantetheine 4'-phosphoryl)serine mark.

The protein operates within antibiotic biosynthesis; daunorubicin biosynthesis. Its pathway is antibiotic biosynthesis; carminomycin biosynthesis. It participates in antibiotic biosynthesis; rhodomycin biosynthesis. It functions in the pathway antibiotic biosynthesis; aclacinomycin biosynthesis. Functionally, involved in the biosynthesis of aklanonate which is an important precursor common to the formation of the clinically significant anthracyclines such as carminomycin, daunorubicin (daunomycin), rhodomycin, aclacinomycin T (aklavin) and aclacinomycin A (aclarubicin). These compounds are aromatic polyketide antibiotics that exhibit high cytotoxicity and are widely applied in the chemotherapy of a variety of cancers. The chain is Anthracycline acyl carrier protein DauA (dauA) from Streptomyces sp. (strain C5).